The following is a 968-amino-acid chain: RNA polymerase-associated protein RapA (968 aa).

Residues 164–334 (DVGRRHAPRV…FARLRLLDPN (171 aa)) form the Helicase ATP-binding domain. 177–184 (DEVGLGKT) is an ATP binding site. The DEAH box signature appears at 280 to 283 (DEAH). Residues 490–662 (RVEWLMGYLT…YLASPDQTEG (173 aa)) form the Helicase C-terminal domain.

The protein belongs to the SNF2/RAD54 helicase family. RapA subfamily. As to quaternary structure, interacts with the RNAP. Has a higher affinity for the core RNAP than for the holoenzyme. Its ATPase activity is stimulated by binding to RNAP.

Transcription regulator that activates transcription by stimulating RNA polymerase (RNAP) recycling in case of stress conditions such as supercoiled DNA or high salt concentrations. Probably acts by releasing the RNAP, when it is trapped or immobilized on tightly supercoiled DNA. Does not activate transcription on linear DNA. Probably not involved in DNA repair. The sequence is that of RNA polymerase-associated protein RapA from Escherichia fergusonii (strain ATCC 35469 / DSM 13698 / CCUG 18766 / IAM 14443 / JCM 21226 / LMG 7866 / NBRC 102419 / NCTC 12128 / CDC 0568-73).